The primary structure comprises 147 residues: Protein-export protein SecB (147 aa).

It belongs to the SecB family. In terms of assembly, homotetramer, a dimer of dimers. One homotetramer interacts with 1 SecA dimer.

The protein resides in the cytoplasm. Functionally, one of the proteins required for the normal export of preproteins out of the cell cytoplasm. It is a molecular chaperone that binds to a subset of precursor proteins, maintaining them in a translocation-competent state. It also specifically binds to its receptor SecA. This is Protein-export protein SecB from Neisseria gonorrhoeae (strain ATCC 700825 / FA 1090).